Here is a 268-residue protein sequence, read N- to C-terminus: Tropinone reductase homolog At2g29170 (268 aa).

22-46 (LVTGGSKGLGEAVVEELAMLGARVH) provides a ligand contact to NADP(+). Serine 155 contacts substrate. The active-site Proton acceptor is the tyrosine 168.

The protein belongs to the short-chain dehydrogenases/reductases (SDR) family. SDR65C subfamily.

The chain is Tropinone reductase homolog At2g29170 from Arabidopsis thaliana (Mouse-ear cress).